The primary structure comprises 498 residues: Glycerol kinase (498 aa).

Threonine 14 is a binding site for ADP. 3 residues coordinate ATP: threonine 14, threonine 15, and serine 16. Residue threonine 14 coordinates sn-glycerol 3-phosphate. Arginine 18 is an ADP binding site. Sn-glycerol 3-phosphate contacts are provided by arginine 84, glutamate 85, and tyrosine 136. Glycerol contacts are provided by arginine 84, glutamate 85, and tyrosine 136. The residue at position 232 (histidine 232) is a Phosphohistidine; by HPr. Aspartate 246 is a sn-glycerol 3-phosphate binding site. Positions 246 and 247 each coordinate glycerol. Threonine 268 and glycine 311 together coordinate ADP. Residues threonine 268, glycine 311, glutamine 315, and glycine 412 each coordinate ATP. ADP-binding residues include glycine 412 and asparagine 416.

The protein belongs to the FGGY kinase family. Homotetramer and homodimer (in equilibrium). The phosphoenolpyruvate-dependent sugar phosphotransferase system (PTS), including enzyme I, and histidine-containing protein (HPr) are required for the phosphorylation, which leads to the activation of the enzyme.

The catalysed reaction is glycerol + ATP = sn-glycerol 3-phosphate + ADP + H(+). Its pathway is polyol metabolism; glycerol degradation via glycerol kinase pathway; sn-glycerol 3-phosphate from glycerol: step 1/1. Its activity is regulated as follows. Activated by phosphorylation and inhibited by fructose 1,6-bisphosphate (FBP). Key enzyme in the regulation of glycerol uptake and metabolism. Catalyzes the phosphorylation of glycerol to yield sn-glycerol 3-phosphate. The polypeptide is Glycerol kinase (Lactococcus lactis subsp. lactis (strain IL1403) (Streptococcus lactis)).